The sequence spans 208 residues: Outer-membrane lipoprotein carrier protein (208 aa).

Positions Met-1–Ala-21 are cleaved as a signal peptide. The interval Lys-188–Glu-208 is disordered. Positions Val-199 to Glu-208 are enriched in acidic residues.

This sequence belongs to the LolA family. Monomer.

The protein localises to the periplasm. Its function is as follows. Participates in the translocation of lipoproteins from the inner membrane to the outer membrane. Only forms a complex with a lipoprotein if the residue after the N-terminal Cys is not an aspartate (The Asp acts as a targeting signal to indicate that the lipoprotein should stay in the inner membrane). In Pseudoalteromonas translucida (strain TAC 125), this protein is Outer-membrane lipoprotein carrier protein.